We begin with the raw amino-acid sequence, 298 residues long: ATP phosphoribosyltransferase (298 aa).

The protein belongs to the ATP phosphoribosyltransferase family. Long subfamily. Mg(2+) is required as a cofactor.

Its subcellular location is the cytoplasm. It catalyses the reaction 1-(5-phospho-beta-D-ribosyl)-ATP + diphosphate = 5-phospho-alpha-D-ribose 1-diphosphate + ATP. It functions in the pathway amino-acid biosynthesis; L-histidine biosynthesis; L-histidine from 5-phospho-alpha-D-ribose 1-diphosphate: step 1/9. With respect to regulation, feedback inhibited by histidine. In terms of biological role, catalyzes the condensation of ATP and 5-phosphoribose 1-diphosphate to form N'-(5'-phosphoribosyl)-ATP (PR-ATP). Has a crucial role in the pathway because the rate of histidine biosynthesis seems to be controlled primarily by regulation of HisG enzymatic activity. In Aliivibrio fischeri (strain MJ11) (Vibrio fischeri), this protein is ATP phosphoribosyltransferase.